An 874-amino-acid chain; its full sequence is Eukaryotic translation initiation factor 3 subunit C (874 aa).

Residues 1 to 70 (MSRFFVSGYT…DGRPSGPAYF (70 aa)) are disordered. Positions 14–61 (SSEEEDLLSTSEEELLSSSDEGEDNESDSSFFGEDDDESEESSSDDED) are enriched in acidic residues. The PCI domain maps to 598–774 (FHQHINLELL…KFISFTSTTE (177 aa)). The disordered stretch occupies residues 797–874 (KNEKTQSNGY…SNNDEFQATA (78 aa)). A compositionally biased stretch (low complexity) spans 813 to 848 (KDQQNQQQQNQNQNQQQQQNQQQQQQQQSSQQQSNN). Over residues 862 to 874 (NVNSNNDEFQATA) the composition is skewed to polar residues.

This sequence belongs to the eIF-3 subunit C family. As to quaternary structure, component of the eukaryotic translation initiation factor 3 (eIF-3) complex.

The protein localises to the cytoplasm. Its function is as follows. Component of the eukaryotic translation initiation factor 3 (eIF-3) complex, which is involved in protein synthesis of a specialized repertoire of mRNAs and, together with other initiation factors, stimulates binding of mRNA and methionyl-tRNAi to the 40S ribosome. The eIF-3 complex specifically targets and initiates translation of a subset of mRNAs involved in cell proliferation. The chain is Eukaryotic translation initiation factor 3 subunit C from Candida albicans (strain SC5314 / ATCC MYA-2876) (Yeast).